The following is a 541-amino-acid chain: MAKDIKFSADARESMVRGVDILADTVKVTLGPKGRNVVLEKAFGSPLITNDGVTIAKEIELEDHFENMGAKLVSEVASKTNDIAGDGTTTATVLTQAIVREGLKNVTAGANPIGIRRGIEAATTTAVEALKAVAQPVSGKEAIAQVASVSSRSEKVGDYISEAMERVGNDGVITIEESRGMETELEVVEGMQFDRGYLSQYMVTDNEKMVADLENPFILITDKKISNIQDILPLLEEVLKTSRPLLIIADDVDGEALPTLVLNKIRGTFNVVAVKAPGFGDRRKAMLEDIAVLTGGTVITEDLGLELKDATMAALGQAAKVTVDKDNTVIVEGAGSSEAISNRVSLIKSQLETTTSEFDREKLQERLAKLAGGVAVIKVGAATETELKEMKLRIEDALNATRAAVEEGIVAGGGTALINVMDKVAALELDGDAATGRNIVLRALEEPVRQIAYNAGYEGSVIIDKLKNSAAGIGFNAATGEWVDMIATGIIDPVKVTRSALQNAASVAGLILTTEAVVATKPEPAAPAMPQGMDPGMMGGF.

Residues 29 to 32 (TLGP), 86 to 90 (DGTTT), glycine 413, 476 to 478 (NAA), and aspartate 492 contribute to the ATP site.

This sequence belongs to the chaperonin (HSP60) family. In terms of assembly, forms a cylinder of 14 subunits composed of two heptameric rings stacked back-to-back. Interacts with the co-chaperonin GroES.

It localises to the cytoplasm. The enzyme catalyses ATP + H2O + a folded polypeptide = ADP + phosphate + an unfolded polypeptide.. In terms of biological role, together with its co-chaperonin GroES, plays an essential role in assisting protein folding. The GroEL-GroES system forms a nano-cage that allows encapsulation of the non-native substrate proteins and provides a physical environment optimized to promote and accelerate protein folding. The chain is Chaperonin GroEL from Streptococcus equi subsp. equi (strain 4047).